We begin with the raw amino-acid sequence, 333 residues long: Coiled-coil domain-containing protein 68 (333 aa).

Coiled coils occupy residues 86 to 120 and 160 to 302; these read LDLL…SREA and EKEQ…HWTE.

In terms of assembly, interacts with CEP170.

It is found in the cytoplasm. The protein localises to the cytoskeleton. It localises to the microtubule organizing center. Its subcellular location is the centrosome. The protein resides in the centriole. In terms of biological role, centriolar protein required for centriole subdistal appendage assembly and microtubule anchoring in interphase cells. Together with CCDC120, cooperate with subdistal appendage components ODF2, NIN and CEP170 for hierarchical subdistal appendage assembly. The chain is Coiled-coil domain-containing protein 68 (Ccdc68) from Mus musculus (Mouse).